Reading from the N-terminus, the 156-residue chain is MAKATFGAGCFWGVEASFRQLHGVQDVAAGYEGGKLDNPTYRDVCTDLTGHAEVVEIDFNPDEIRFEQLLEAFFGLHDPTQLNRQGPDWGTQYRSVIFYHSPEQQTVAQAFIDRLTAEKRFPRPIVTQVVPAATFWRAEEYHQRYLEKRGLATCHI.

Cys10 is a catalytic residue.

It belongs to the MsrA Met sulfoxide reductase family.

The catalysed reaction is L-methionyl-[protein] + [thioredoxin]-disulfide + H2O = L-methionyl-(S)-S-oxide-[protein] + [thioredoxin]-dithiol. The enzyme catalyses [thioredoxin]-disulfide + L-methionine + H2O = L-methionine (S)-S-oxide + [thioredoxin]-dithiol. Its function is as follows. Has an important function as a repair enzyme for proteins that have been inactivated by oxidation. Catalyzes the reversible oxidation-reduction of methionine sulfoxide in proteins to methionine. The polypeptide is Peptide methionine sulfoxide reductase MsrA (Acidobacterium capsulatum (strain ATCC 51196 / DSM 11244 / BCRC 80197 / JCM 7670 / NBRC 15755 / NCIMB 13165 / 161)).